Consider the following 126-residue polypeptide: Acidic phospholipase A2 4 (126 aa).

S1 is a signal peptide. Residues 2 to 7 (NRPMPL) constitute a propeptide that is removed on maturation. Disulfide bonds link C18-C78, C33-C125, C35-C51, C50-C106, C57-C99, C67-C92, and C85-C97. Positions 34, 36, and 38 each coordinate Ca(2+). H54 is a catalytic residue. Residue D55 participates in Ca(2+) binding. D100 is a catalytic residue.

Belongs to the phospholipase A2 family. Group I subfamily. D49 sub-subfamily. Monomer. It depends on Ca(2+) as a cofactor. As to expression, expressed by the venom gland.

The protein resides in the secreted. It carries out the reaction a 1,2-diacyl-sn-glycero-3-phosphocholine + H2O = a 1-acyl-sn-glycero-3-phosphocholine + a fatty acid + H(+). Snake venom phospholipase A2 (PLA2) that exhibits strong anticoagulant activity, which is not due to the catalytic activity. PLA2 catalyzes the calcium-dependent hydrolysis of the 2-acyl groups in 3-sn-phosphoglycerides. The sequence is that of Acidic phospholipase A2 4 from Naja sagittifera (Andaman cobra).